The chain runs to 331 residues: Isopenicillin N synthase (331 aa).

4 residues coordinate isopenicillin N: R87, Y91, S183, and Y189. N-[(5S)-5-amino-5-carboxypentanoyl]-L-cysteinyl-D-valine contacts are provided by R87, Y91, S183, Y189, H214, and D216. Positions 176–288 (KPDDTLASVV…RQSLPFFVNL (113 aa)) constitute a Fe2OG dioxygenase domain. Positions 214, 216, and 270 each coordinate Fe(2+). A 2-oxoglutarate-binding site is contributed by R279. S281 is a binding site for isopenicillin N. S281 is a binding site for N-[(5S)-5-amino-5-carboxypentanoyl]-L-cysteinyl-D-valine.

The protein belongs to the iron/ascorbate-dependent oxidoreductase family. In terms of assembly, monomer. Requires Fe(2+) as cofactor.

It is found in the cytoplasm. It localises to the cytosol. The catalysed reaction is N-[(5S)-5-amino-5-carboxypentanoyl]-L-cysteinyl-D-valine + O2 = isopenicillin N + 2 H2O. Its pathway is antibiotic biosynthesis; penicillin G biosynthesis; penicillin G from L-alpha-aminoadipate and L-cysteine and L-valine: step 2/3. Its function is as follows. Isopenicillin N synthase; part of the gene cluster that mediates the biosynthesis of penicillin, the world's most important antibiotic. IpnA catalyzes the cyclization of the tripeptide N-[(5S)-5-amino-5-carboxypentanoyl]-L-cysteinyl-D-valine (LLD-ACV or ACV) to form isopenicillin N (IPN) that contains the beta-lactam nucleus. The penicillin biosynthesis occurs via 3 enzymatic steps, the first corresponding to the production of the tripeptide N-[(5S)-5-amino-5-carboxypentanoyl]-L-cysteinyl-D-valine (LLD-ACV or ACV) by the NRPS acvA. The tripeptide ACV is then cyclized to isopenicillin N (IPN) by the isopenicillin N synthase ipnA that forms the beta-lactam nucleus. Finally, the alpha-aminoadipyl side chain is exchanged for phenylacetic acid by the isopenicillin N acyltransferase penDE to yield penicillin in the peroxisomal matrix. In Emericella nidulans (strain FGSC A4 / ATCC 38163 / CBS 112.46 / NRRL 194 / M139) (Aspergillus nidulans), this protein is Isopenicillin N synthase.